Here is a 187-residue protein sequence, read N- to C-terminus: Small ribosomal subunit protein uS10m (187 aa).

Belongs to the universal ribosomal protein uS10 family. In terms of assembly, component of the mitochondrial ribosome small subunit (28S) which comprises a 12S rRNA and about 30 distinct proteins.

It localises to the mitochondrion. The chain is Small ribosomal subunit protein uS10m (mrps10) from Danio rerio (Zebrafish).